The sequence spans 445 residues: MREIIHLQTGQCGNQVGTAFWQTIHGEHGLDQDGVFRGSDEQQSERLSVYFTEAAKQKYVPRAVLVDLEPATMDAIRSGPLGDFFRPDNMVYGQSGAGNNWAKGHYTEGAELVDQVLDVVRREAEACDSLQGFQITHSLGGGTGSGMGTLLIAKVREEFPDRMMATFSVLPSAKVSEVVVEPYNATLSIHQLVENSDETFCIDNEALYDICRRTLKQAHPSYGHLNHLVSRVMSGLTTGFRFPGQLNADLRKLAVNLVPFPRLHFFTVGFAPLTSSASFSNLGIAELTQQMFDPKNVMLASDFRDGRFLTCSTMFRGKVSMKQVEEQIQAIKNKNSANFVEWIPNNIQTAHCSVPPKGLDVSSTFIGNSTAIQNSFRRVGDQFSLMFRRKAFLHWYTGEGMDEMEFTEAESNMNDLVSEYQQYQDAGMDDEYGEEYEDEAPAEEE.

Gln-11, Glu-69, Ser-138, Gly-142, Thr-143, Gly-144, Asn-204, and Asn-226 together coordinate GTP. A Mg(2+)-binding site is contributed by Glu-69. The interval 422 to 445 (QYQDAGMDDEYGEEYEDEAPAEEE) is disordered. Residues 427–445 (GMDDEYGEEYEDEAPAEEE) are compositionally biased toward acidic residues.

This sequence belongs to the tubulin family. As to quaternary structure, dimer of alpha and beta chains. A typical microtubule is a hollow water-filled tube with an outer diameter of 25 nm and an inner diameter of 15 nM. Alpha-beta heterodimers associate head-to-tail to form protofilaments running lengthwise along the microtubule wall with the beta-tubulin subunit facing the microtubule plus end conferring a structural polarity. Microtubules usually have 13 protofilaments but different protofilament numbers can be found in some organisms and specialized cells. Requires Mg(2+) as cofactor.

Its subcellular location is the cytoplasm. The protein resides in the cytoskeleton. Its function is as follows. Tubulin is the major constituent of microtubules, a cylinder consisting of laterally associated linear protofilaments composed of alpha- and beta-tubulin heterodimers. Microtubules grow by the addition of GTP-tubulin dimers to the microtubule end, where a stabilizing cap forms. Below the cap, tubulin dimers are in GDP-bound state, owing to GTPase activity of alpha-tubulin. This chain is Tubulin beta-1 chain (TUB1), found in Colletotrichum graminicola (Maize anthracnose fungus).